Consider the following 259-residue polypeptide: uncharacterized protein (259 aa).

Positions 4–243 constitute an ABC transporter domain; that stretch reads INLKNINLTR…KILTDFYQEK (240 aa). 36–43 contributes to the ATP binding site; it reads GLNGSGKS.

The protein belongs to the ABC transporter superfamily.

This is an uncharacterized protein from Lactococcus lactis subsp. lactis (strain IL1403) (Streptococcus lactis).